We begin with the raw amino-acid sequence, 273 residues long: MSLLHVHHVGHRYRTGGLLRKRGWLQVLDGIDLQLHAGESIGLLGSSGSGKSTLARLLLGLEKPAQGQVSFAGQDVSQLKGEQARAFQRTVQLVFQDAPGAFNPQRSIGWSIAEPLRHLTDMDEAARQARTLALLEEMGLRAEHAQRLPQQLSGGQLQRANIARALAASPQLVVLDEALSNLDRLLQLQILQQLEALRQRSGTAFVLISHDLSLVQYFCQRVVLLHGGRIVEERPVTHDLCFAHPVGRQLQAAVLPVRPQRRPSPQGLPTAAH.

Residues 13–252 (YRTGGLLRKR…AHPVGRQLQA (240 aa)) enclose the ABC transporter domain. 45–52 (GSSGSGKS) serves as a coordination point for ATP.

Belongs to the ABC transporter superfamily. Nickel importer (TC 3.A.1.5.3) family. The complex is composed of two ATP-binding proteins (NikD and NikE), two transmembrane proteins (NikB and NikC) and a solute-binding protein (NikA).

It is found in the cell inner membrane. It catalyses the reaction Ni(2+)(out) + ATP + H2O = Ni(2+)(in) + ADP + phosphate + H(+). Part of the ABC transporter complex NikABCDE involved in nickel import. Responsible for energy coupling to the transport system. The protein is Nickel import ATP-binding protein NikE of Pseudomonas putida (strain ATCC 47054 / DSM 6125 / CFBP 8728 / NCIMB 11950 / KT2440).